We begin with the raw amino-acid sequence, 232 residues long: Triosephosphate isomerase (232 aa).

6-8 (NFK) serves as a coordination point for substrate. Histidine 86 acts as the Electrophile in catalysis. Glutamate 155 serves as the catalytic Proton acceptor. 2 residues coordinate substrate: glycine 161 and serine 191.

Belongs to the triosephosphate isomerase family. Homodimer.

It localises to the cytoplasm. The enzyme catalyses D-glyceraldehyde 3-phosphate = dihydroxyacetone phosphate. It functions in the pathway carbohydrate biosynthesis; gluconeogenesis. Its pathway is carbohydrate degradation; glycolysis; D-glyceraldehyde 3-phosphate from glycerone phosphate: step 1/1. Its function is as follows. Involved in the gluconeogenesis. Catalyzes stereospecifically the conversion of dihydroxyacetone phosphate (DHAP) to D-glyceraldehyde-3-phosphate (G3P). The polypeptide is Triosephosphate isomerase (Nitratiruptor sp. (strain SB155-2)).